The chain runs to 555 residues: Connector enhancer of kinase suppressor of ras 3 (555 aa).

The SAM domain maps to Trp7–Leu72. A CRIC domain is found at Asn80–Ala174. The PDZ domain maps to Glu211 to Pro293. 3 disordered regions span residues Arg308–Ser333, Pro348–Glu391, and Pro518–Gly538. A compositionally biased stretch (low complexity) spans Pro311–Thr329. Residues Ser325–Trp546 form the DUF1170 domain. Residues Ser381 and Ser383 each carry the phosphoserine modification.

The protein belongs to the CNKSR family. Interacts with epithelial sodium channel ENaC. Interacts directly with SCNN1A (ENaC subunit alpha) and SCNN1B (ENaC subunit beta) C-terminal tails. Interacts with ENaC regulatory proteins NEDD4L, RAF1 and SGK1.

It is found in the cytoplasm. The protein localises to the apical cell membrane. Involved in transepithelial sodium transport. Regulates aldosterone-induced and epithelial sodium channel (ENaC)-mediated sodium transport through regulation of ENaC cell surface expression. Acts as a scaffold protein coordinating the assembly of an ENaC-regulatory complex (ERC). This chain is Connector enhancer of kinase suppressor of ras 3 (Cnksr3), found in Rattus norvegicus (Rat).